The sequence spans 626 residues: Glutamine--fructose-6-phosphate aminotransferase [isomerizing] (626 aa).

Cys2 functions as the Nucleophile; for GATase activity in the catalytic mechanism. The Glutamine amidotransferase type-2 domain occupies 2–222 (CGIVGYIGPQ…NGELARLTPT (221 aa)). SIS domains lie at 293 to 441 (LPPS…QRQS) and 471 to 616 (YIEA…VDQP). The active-site For Fru-6P isomerization activity is Lys621.

Homodimer.

Its subcellular location is the cytoplasm. The catalysed reaction is D-fructose 6-phosphate + L-glutamine = D-glucosamine 6-phosphate + L-glutamate. In terms of biological role, catalyzes the first step in hexosamine metabolism, converting fructose-6P into glucosamine-6P using glutamine as a nitrogen source. In Thermosynechococcus vestitus (strain NIES-2133 / IAM M-273 / BP-1), this protein is Glutamine--fructose-6-phosphate aminotransferase [isomerizing].